A 415-amino-acid chain; its full sequence is Granaticin polyketide putative beta-ketoacyl synthase 2 (415 aa).

The region spanning 6–406 is the Ketosynthase family 3 (KS3) domain; sequence RRRAVVTGLS…GFNSAVVVTL (401 aa).

Belongs to the thiolase-like superfamily. Beta-ketoacyl-ACP synthases family.

Its pathway is antibiotic biosynthesis; granaticin biosynthesis. The protein is Granaticin polyketide putative beta-ketoacyl synthase 2 (gra-orf2) of Streptomyces violaceoruber.